Reading from the N-terminus, the 302-residue chain is Vomeronasal type-1 receptor 48 (302 aa).

The Extracellular portion of the chain corresponds to 1-16; sequence MNENSRLHTHSNIRNT. Residues 17 to 37 form a helical membrane-spanning segment; it reads FFSEIGIGISGNSFLLLFHII. At 38 to 49 the chain is on the cytoplasmic side; the sequence is KFFRGHRPRLTD. A helical transmembrane segment spans residues 50 to 70; sequence LPIGLLSLIHLLMLLVAAVIA. Residues 71 to 91 are Extracellular-facing; sequence TDIFISWRGWNDIICKFLVYL. Residues cysteine 85 and cysteine 172 are joined by a disulfide bond. A helical transmembrane segment spans residues 92 to 114; that stretch reads YRSLRGLSLCTTSMLSVLQAIIL. Residues 115-131 are Cytoplasmic-facing; the sequence is SPRSYCLAKFKRKSSHN. The helical transmembrane segment at 132-152 threads the bilayer; sequence ISCAIIFLSVLYMSISSHLLI. The Extracellular portion of the chain corresponds to 153–193; that stretch reads SITATPNLTMNDFLYVSQSCSLLPLSYLMQSIYSTLLVLRE. Asparagine 159 carries N-linked (GlcNAc...) asparagine glycosylation. The helical transmembrane segment at 194–214 threads the bilayer; the sequence is VFLIGLMVLSTSYMVALLYMH. Topologically, residues 215–238 are cytoplasmic; it reads RKQAQNLQGTSLSLKASAEQRATQ. A helical transmembrane segment spans residues 239 to 259; the sequence is TILMLMTFFVLMSIFDSIVSC. Residues 260 to 269 lie on the Extracellular side of the membrane; it reads SRTMFLDDPT. The chain crosses the membrane as a helical span at residues 270–290; sequence SYSIHIFVMHIYATVSPFVFI. At 291–302 the chain is on the cytoplasmic side; it reads STEKHIVNILRG.

It belongs to the G-protein coupled receptor 1 family.

The protein localises to the cell membrane. Its function is as follows. Putative pheromone receptor implicated in the regulation of social and reproductive behavior. The chain is Vomeronasal type-1 receptor 48 (Vmn1r48) from Mus musculus (Mouse).